The primary structure comprises 454 residues: Inner membrane permease YgbN (454 aa).

Position 1 (methionine 1) is a topological domain, periplasmic. The helical transmembrane segment at 2 to 22 (STITLLCIALAGVIMLLLLVI) threads the bilayer. Topologically, residues 23–27 (KAKVQ) are cytoplasmic. The helical transmembrane segment at 28 to 48 (PFVALLLVSLLVALAAGIPAG) threads the bilayer. The Periplasmic portion of the chain corresponds to 49–52 (EVGK). Residues 53-73 (VMIAGMGGVLGSVTIIIGLGA) form a helical membrane-spanning segment. The Cytoplasmic portion of the chain corresponds to 74–108 (MLGRMIEHSGGAESLANYFSRKLGDKRTIAALTLA). A helical membrane pass occupies residues 109 to 129 (AFFLGIPVFFDVGFIILAPII). The Periplasmic portion of the chain corresponds to 130–137 (YGFAKVAK). The helical transmembrane segment at 138 to 158 (ISPLKFGLPVAGIMLTVHVAV) threads the bilayer. Residues 159-174 (PPHPGPVAAAGLLHAD) are Cytoplasmic-facing. Residues 175-195 (IGWLTIIGIAISIPVGVVGYF) form a helical membrane-spanning segment. Residues 196 to 235 (AAKIINKRQYAMSVEVLEQMQLAPASEEGATKLSDKINPP) lie on the Periplasmic side of the membrane. A helical transmembrane segment spans residues 236-256 (GVALVTSLIVIPIAIIMAGTV). The Cytoplasmic segment spans residues 257-273 (SATLMPPSHPLLGTLQL). The chain crosses the membrane as a helical span at residues 274 to 294 (IGSPMVALMIALVLAFWLLAL). At 295–305 (RRGWSLQHTSD) the chain is on the periplasmic side. The helical transmembrane segment at 306–326 (IMGSALPTAAVVILVTGAGGV) threads the bilayer. Over 327–341 (FGKVLVESGVGKALA) the chain is Cytoplasmic. The helical transmembrane segment at 342–362 (NMLQMIDLPLLPAAFIISLAL) threads the bilayer. Residues 363 to 383 (RASQGSATVAILTTGGLLSEA) lie on the Periplasmic side of the membrane. The chain crosses the membrane as a helical span at residues 384–404 (VMGLNPIQCVLVTLAACFGGL). The Cytoplasmic segment spans residues 405-433 (GASHINDSGFWIVTKYLGLSVADGLKTWT). A helical transmembrane segment spans residues 434–454 (VLTTILGFTGFLITWCVWAVI).

This sequence belongs to the GntP permease family.

Its subcellular location is the cell inner membrane. The sequence is that of Inner membrane permease YgbN (ygbN) from Escherichia coli (strain K12).